A 236-amino-acid chain; its full sequence is Purine nucleoside phosphorylase DeoD-type 2 (236 aa).

H5 is an a purine D-ribonucleoside binding site. Phosphate contacts are provided by residues G21, R25, R44, and 88 to 91 (RVGS). Residues 180-182 (DME) and 204-205 (SD) each bind a purine D-ribonucleoside. The active-site Proton donor is the D205.

This sequence belongs to the PNP/UDP phosphorylase family. Homohexamer; trimer of homodimers.

The enzyme catalyses a purine D-ribonucleoside + phosphate = a purine nucleobase + alpha-D-ribose 1-phosphate. The catalysed reaction is a purine 2'-deoxy-D-ribonucleoside + phosphate = a purine nucleobase + 2-deoxy-alpha-D-ribose 1-phosphate. Functionally, catalyzes the reversible phosphorolytic breakdown of the N-glycosidic bond in the beta-(deoxy)ribonucleoside molecules, with the formation of the corresponding free purine bases and pentose-1-phosphate. This is Purine nucleoside phosphorylase DeoD-type 2 from Vibrio vulnificus (strain CMCP6).